Consider the following 201-residue polypeptide: Eukaryotic translation initiation factor 4E-5 (201 aa).

C122 and C126 are disulfide-bonded.

It belongs to the eukaryotic initiation factor 4E family. In terms of assembly, eIF4F is a multi-subunit complex, the composition of which varies with external and internal environmental conditions. It is composed of at least eIF4A, eIF4E and eIF4G. eIF4E is also known to interact with other partners. In terms of tissue distribution, enriched in the germline.

In terms of biological role, recognizes and binds the 7-methylguanosine-containing mRNA cap during an early step in the initiation of protein synthesis and facilitates ribosome binding by inducing the unwinding of the mRNAs secondary structures. All 5 eIF4E proteins bind monomethyl cap structures. Only ife-1, ife-2 and ife-5 bind trimethyl cap structures which result from trans-splicing. Translation of trimethyl cap structure mRNAs may be regulated by intracellular redox state; disulfide bonds change the width and depth of the cap-binding cavity determining selectivity to mRNA caps. In Caenorhabditis elegans, this protein is Eukaryotic translation initiation factor 4E-5 (ife-5).